Here is a 340-residue protein sequence, read N- to C-terminus: tRNA-specific 2-thiouridylase MnmA (340 aa).

ATP is bound by residues 6–13 and M32; that span reads AMSGGVDS. C92 serves as the catalytic Nucleophile. C92 and C186 form a disulfide bridge. An ATP-binding site is contributed by G116. The segment at 134–136 is interaction with tRNA; that stretch reads KDQ. The active-site Cysteine persulfide intermediate is the C186. The interaction with tRNA stretch occupies residues 288–289; it reads RY.

The protein belongs to the MnmA/TRMU family.

Its subcellular location is the cytoplasm. The catalysed reaction is S-sulfanyl-L-cysteinyl-[protein] + uridine(34) in tRNA + AH2 + ATP = 2-thiouridine(34) in tRNA + L-cysteinyl-[protein] + A + AMP + diphosphate + H(+). In terms of biological role, catalyzes the 2-thiolation of uridine at the wobble position (U34) of tRNA, leading to the formation of s(2)U34. The polypeptide is tRNA-specific 2-thiouridylase MnmA (Campylobacter concisus (strain 13826)).